The chain runs to 480 residues: G-rich sequence factor 1 (480 aa).

Residues 1–117 constitute a mitochondrion transit peptide; it reads MAGTRWVLGA…AAAAVPTRSY (117 aa). RRM domains lie at 122 to 246 and 250 to 326; these read KTTY…SSPV and GVVR…PSRR. A Phosphoserine modification is found at Ser-244. A Phosphoserine modification is found at Ser-335. One can recognise an RRM 3 domain in the interval 401–480; it reads HFVHMRGLPF…LFLNSCPKGK (80 aa).

In terms of assembly, monomer. Found in a complex with DDX28, DHX30, FASTKD2 and FASTKD5. Interacts with the mitochondrial RNase P complex subunit TRMT10C/MRPP1. Interacts with the 2 components of the mitochondrial degradosome complex, PNPT1 and SUPV3L1, in an RNA-dependent manner.

Its subcellular location is the mitochondrion matrix. It is found in the cytoplasm. In terms of biological role, regulator of post-transcriptional mitochondrial gene expression, required for assembly of the mitochondrial ribosome and for recruitment of mRNA and lncRNA. Binds RNAs containing the 14 base G-rich element. Preferentially binds RNAs transcribed from three contiguous genes on the light strand of mtDNA, the ND6 mRNA, and the long non-coding RNAs for MT-CYB and MT-ND5, each of which contains multiple consensus binding sequences. Involved in the degradosome-mediated decay of non-coding mitochondrial transcripts (MT-ncRNA) and tRNA-like molecules. Acts by unwinding G-quadruplex RNA structures in MT-ncRNA, thus facilitating their degradation by the degradosome. G-quadruplexes (G4) are non-canonical 4 stranded structures formed by transcripts from the light strand of mtDNA. This Homo sapiens (Human) protein is G-rich sequence factor 1 (GRSF1).